A 594-amino-acid chain; its full sequence is UvrABC system protein C (594 aa).

A GIY-YIG domain is found at 13-99 (NSSGVYQYFD…IKQLKPKYNI (87 aa)). Positions 205 to 240 (DRLIKELELKMERLSSKLRFEEALIYRDRIAKIQKI) constitute a UVR domain.

This sequence belongs to the UvrC family. In terms of assembly, interacts with UvrB in an incision complex.

Its subcellular location is the cytoplasm. Functionally, the UvrABC repair system catalyzes the recognition and processing of DNA lesions. UvrC both incises the 5' and 3' sides of the lesion. The N-terminal half is responsible for the 3' incision and the C-terminal half is responsible for the 5' incision. The chain is UvrABC system protein C from Helicobacter pylori (strain P12).